A 229-amino-acid chain; its full sequence is Enolase-phosphatase E1 (229 aa).

The tract at residues 207-229 (RDPASHHPQVQRFDDIHPEQIPA) is disordered. Residues 218 to 229 (RFDDIHPEQIPA) show a composition bias toward basic and acidic residues.

This sequence belongs to the HAD-like hydrolase superfamily. MasA/MtnC family. As to quaternary structure, monomer. It depends on Mg(2+) as a cofactor.

It carries out the reaction 5-methylsulfanyl-2,3-dioxopentyl phosphate + H2O = 1,2-dihydroxy-5-(methylsulfanyl)pent-1-en-3-one + phosphate. It functions in the pathway amino-acid biosynthesis; L-methionine biosynthesis via salvage pathway; L-methionine from S-methyl-5-thio-alpha-D-ribose 1-phosphate: step 3/6. Its pathway is amino-acid biosynthesis; L-methionine biosynthesis via salvage pathway; L-methionine from S-methyl-5-thio-alpha-D-ribose 1-phosphate: step 4/6. In terms of biological role, bifunctional enzyme that catalyzes the enolization of 2,3-diketo-5-methylthiopentyl-1-phosphate (DK-MTP-1-P) into the intermediate 2-hydroxy-3-keto-5-methylthiopentenyl-1-phosphate (HK-MTPenyl-1-P), which is then dephosphorylated to form the acireductone 1,2-dihydroxy-3-keto-5-methylthiopentene (DHK-MTPene). The sequence is that of Enolase-phosphatase E1 from Klebsiella pneumoniae (strain 342).